The sequence spans 344 residues: MACLTLALDAMGGDFGPCVTVPASLQALASNPQLKLLLVGNPDTITPLLANADSLLLERLQVIPAEHVIASDAKPSQAIRASRGTSMRVALELVKNGEAAACVSAGNTGALMGLAKMMIKPLEGIARPALMTVIPNQRRSKTVVLDLGANVECDSTMLVQFAVMGSVMAEEVVGIVEPRVALLNIGEEENKGLDNIREAAAVLKNTPAINYIGYLEGNDLLTGKTDVMVCDGFVGNVTLKTMEGVIRMFLSLLKPSGEGSKQSWWLKLIGRWLQKRVAKRFGHLNPDQYNGACLLGLRGIVIKSHGAANQRAFAVAIEQAVQAVQRQVPERIAARLEAVLPKSD.

It belongs to the PlsX family. In terms of assembly, homodimer. Probably interacts with PlsY.

The protein localises to the cytoplasm. It catalyses the reaction a fatty acyl-[ACP] + phosphate = an acyl phosphate + holo-[ACP]. The protein operates within lipid metabolism; phospholipid metabolism. Catalyzes the reversible formation of acyl-phosphate (acyl-PO(4)) from acyl-[acyl-carrier-protein] (acyl-ACP). This enzyme utilizes acyl-ACP as fatty acyl donor, but not acyl-CoA. In Yersinia pestis bv. Antiqua (strain Antiqua), this protein is Phosphate acyltransferase.